Here is a 144-residue protein sequence, read N- to C-terminus: Small ribosomal subunit protein uS19 (144 aa).

The protein belongs to the universal ribosomal protein uS19 family.

The protein is Small ribosomal subunit protein uS19 (rps15) of Dictyostelium discoideum (Social amoeba).